Reading from the N-terminus, the 494-residue chain is UPF0371 protein SPJ_0333 (494 aa).

It belongs to the UPF0371 family.

The polypeptide is UPF0371 protein SPJ_0333 (Streptococcus pneumoniae (strain JJA)).